We begin with the raw amino-acid sequence, 202 residues long: ATP-dependent Clp protease proteolytic subunit (202 aa).

S101 (nucleophile) is an active-site residue. The active site involves H126.

The protein belongs to the peptidase S14 family. Component of the chloroplastic Clp protease core complex.

It localises to the plastid. Its subcellular location is the chloroplast stroma. The enzyme catalyses Hydrolysis of proteins to small peptides in the presence of ATP and magnesium. alpha-casein is the usual test substrate. In the absence of ATP, only oligopeptides shorter than five residues are hydrolyzed (such as succinyl-Leu-Tyr-|-NHMec, and Leu-Tyr-Leu-|-Tyr-Trp, in which cleavage of the -Tyr-|-Leu- and -Tyr-|-Trp bonds also occurs).. Cleaves peptides in various proteins in a process that requires ATP hydrolysis. Has a chymotrypsin-like activity. Plays a major role in the degradation of misfolded proteins. This chain is ATP-dependent Clp protease proteolytic subunit, found in Liriodendron tulipifera (Tuliptree).